We begin with the raw amino-acid sequence, 209 residues long: Endoplasmic reticulum vesicle protein 25 (209 aa).

Residues 1–18 form the signal peptide; that stretch reads MKYTTFGIISLFLSVTWA. At 19–178 the chain is on the lumenal side; sequence LRFELAASFE…TNESTNRRVR (160 aa). The GOLD domain occupies 31–119; that stretch reads PFCIRDFVEA…MRNVEVNIES (89 aa). The helical transmembrane segment at 179-199 threads the bilayer; sequence NFSMAVIVVFAALCAWQLNYL. Over 200–209 the chain is Cytoplasmic; the sequence is KNYFRAKHII.

Belongs to the EMP24/GP25L family.

The protein localises to the endoplasmic reticulum membrane. The protein resides in the golgi apparatus membrane. Constituent of COPII-coated endoplasmic reticulum-derived transport vesicles. Required for efficient transport of a subset of secretory proteins to the Golgi. Facilitates retrograde transport from the Golgi to the endoplasmic reticulum. This chain is Endoplasmic reticulum vesicle protein 25 (ERV25), found in Eremothecium gossypii (strain ATCC 10895 / CBS 109.51 / FGSC 9923 / NRRL Y-1056) (Yeast).